Here is a 217-residue protein sequence, read N- to C-terminus: 3,4-dihydroxy-2-butanone 4-phosphate synthase (217 aa).

D-ribulose 5-phosphate-binding positions include 37-38 (RE), D42, 150-154 (RRGHT), and E174. E38 serves as a coordination point for Mg(2+). Residue H153 participates in Mg(2+) binding.

The protein belongs to the DHBP synthase family. Homodimer. Mg(2+) is required as a cofactor. Requires Mn(2+) as cofactor.

The catalysed reaction is D-ribulose 5-phosphate = (2S)-2-hydroxy-3-oxobutyl phosphate + formate + H(+). It functions in the pathway cofactor biosynthesis; riboflavin biosynthesis; 2-hydroxy-3-oxobutyl phosphate from D-ribulose 5-phosphate: step 1/1. In terms of biological role, catalyzes the conversion of D-ribulose 5-phosphate to formate and 3,4-dihydroxy-2-butanone 4-phosphate. The polypeptide is 3,4-dihydroxy-2-butanone 4-phosphate synthase (Shewanella baltica (strain OS223)).